A 409-amino-acid chain; its full sequence is S-adenosylmethionine synthase (409 aa).

Residue 141–146 participates in ATP binding; that stretch reads GQGSAD.

It belongs to the AdoMet synthase 2 family. It depends on Mg(2+) as a cofactor.

The enzyme catalyses L-methionine + ATP + H2O = S-adenosyl-L-methionine + phosphate + diphosphate. It functions in the pathway amino-acid biosynthesis; S-adenosyl-L-methionine biosynthesis; S-adenosyl-L-methionine from L-methionine: step 1/1. Functionally, catalyzes the formation of S-adenosylmethionine from methionine and ATP. The chain is S-adenosylmethionine synthase from Hyperthermus butylicus (strain DSM 5456 / JCM 9403 / PLM1-5).